Here is a 350-residue protein sequence, read N- to C-terminus: Beta-hexosaminidase (350 aa).

Substrate contacts are provided by residues Asp73, Arg81, Arg148, and 178 to 179 (KH). His191 acts as the Proton donor/acceptor in catalysis. Asp262 acts as the Nucleophile in catalysis.

The protein belongs to the glycosyl hydrolase 3 family. NagZ subfamily.

The protein localises to the cytoplasm. It carries out the reaction Hydrolysis of terminal non-reducing N-acetyl-D-hexosamine residues in N-acetyl-beta-D-hexosaminides.. The protein operates within cell wall biogenesis; peptidoglycan recycling. In terms of biological role, plays a role in peptidoglycan recycling by cleaving the terminal beta-1,4-linked N-acetylglucosamine (GlcNAc) from peptide-linked peptidoglycan fragments, giving rise to free GlcNAc, anhydro-N-acetylmuramic acid and anhydro-N-acetylmuramic acid-linked peptides. This is Beta-hexosaminidase from Bordetella avium (strain 197N).